The following is a 561-amino-acid chain: Transmembrane protein 209 (561 aa).

A phosphoserine mark is found at Ser-9 and Ser-11. A helical transmembrane segment spans residues 28–48 (VVLAWGLLNVSMAGMIYTEMT). Asn-57 carries N-linked (GlcNAc...) asparagine glycosylation. Residues 60-80 (YWPLWYIELALASLFSLNALF) form a helical membrane-spanning segment. A Phosphoserine modification is found at Ser-98. Disordered stretches follow at residues 120-156 (LAATQISPSPPSPSIQGQSVLSYSPSRSPSTSPKFAT) and 196-233 (SLSPSSPYPTTVGPVESSGLRARYRSPPTAYNSPTDKE). Over residues 138-152 (SVLSYSPSRSPSTSP) the composition is skewed to low complexity. Residues Ser-201 and Ser-248 each carry the phosphoserine modification. The disordered stretch occupies residues 250-270 (EEKQHRVKLGSPDSTSPSTSP). Low complexity predominate over residues 260 to 270 (SPDSTSPSTSP). Asn-274 is a glycosylation site (N-linked (GlcNAc...) asparagine). Ser-278 is subject to Phosphoserine.

In terms of assembly, interacts with NUP205.

It localises to the membrane. The protein resides in the nucleus envelope. Its subcellular location is the golgi apparatus. The protein localises to the cytoplasm. In terms of biological role, nuclear envelope protein which in association with NUP205, may be involved in nuclear transport of various nuclear proteins in addition to MYC. The polypeptide is Transmembrane protein 209 (Tmem209) (Rattus norvegicus (Rat)).